A 247-amino-acid polypeptide reads, in one-letter code: Sensory rhodopsin-1 (247 aa).

Over 1 to 4 (MTGA) the chain is Extracellular. Residues 5–26 (VSAAYWIAAVAFLVGLGITAAL) form a helical membrane-spanning segment. Residues 27–35 (YAKLGESED) lie on the Cytoplasmic side of the membrane. Residues 36 to 57 (RGRLAALAVIPGFAGLAYAGMA) form a helical membrane-spanning segment. Topologically, residues 58 to 71 (LGIGTVTVNGAELV) are extracellular. Residues 72–93 (GLRYVDWIVTTPLLVGFIGYVA) traverse the membrane as a helical segment. The Cytoplasmic portion of the chain corresponds to 94–96 (GAS). A helical membrane pass occupies residues 97–119 (RRAIAGVMLADALMIAFGAGAVV). Residues 120-123 (TGGT) are Extracellular-facing. The helical transmembrane segment at 124 to 151 (LKWVLFGVSSIFHVTLFAYLYVVFPRAV) threads the bilayer. The Cytoplasmic segment spans residues 152-154 (PDD). The chain crosses the membrane as a helical span at residues 155–182 (PMQRGLFSLLKNHVGLLWLAYPFVWLMG). The Extracellular segment spans residues 183–190 (PAGIGFTT). The helical transmembrane segment at 191 to 223 (GVGAALTYAFLDVLAKVPYVYFFYARRQAFTDV) threads the bilayer. Lys206 bears the N6-(retinylidene)lysine mark. The Cytoplasmic portion of the chain corresponds to 224 to 247 (VSAATADREDATDAVGDGAPTAAD).

The protein belongs to the archaeal/bacterial/fungal opsin family. In terms of assembly, interacts with HTR-I.

The protein resides in the cell membrane. Involved in the control of phototaxis. Mediates both photoattractant (in the orange light) and photophobic (in the near UV light) responses. The signal is then transmitted to the sensory rhodopsin I transducer (HTR-I). This is Sensory rhodopsin-1 (sop1) from Halobacterium sp. (strain SG1).